Reading from the N-terminus, the 41-residue chain is Trypsin inhibitor 2c (41 aa).

Disulfide bonds link C11–C32 and C15–C28.

In terms of biological role, inhibits bovine trypsin with a Ki of 0.174 nM and trypsin-like proteases from G.mellonella larvae. Has no activity against serine proteases chymotrypsin, subtilisin and elastase. Has no activity against cysteine proteases from beetle gut. This chain is Trypsin inhibitor 2c, found in Fagopyrum esculentum (Common buckwheat).